The following is a 149-amino-acid chain: Putative prefoldin subunit alpha (149 aa).

It belongs to the prefoldin subunit alpha family.

It localises to the cytoplasm. Functionally, molecular chaperone capable of stabilizing a range of proteins. The polypeptide is Putative prefoldin subunit alpha (Aquifex aeolicus (strain VF5)).